The primary structure comprises 570 residues: Auxin efflux carrier component 6 (570 aa).

The Extracellular portion of the chain corresponds to 1–6; that stretch reads MITGNE. Residues 7 to 27 traverse the membrane as a helical segment; that stretch reads FYTVMCAMAPLYFAMFVAYGS. At 28–38 the chain is on the cytoplasmic side; the sequence is VKWCKIFTPAQ. Residues 39-59 traverse the membrane as a helical segment; sequence CSGINRFVSVFAVPVLSFHFI. Valine 51 contacts (indol-3-yl)acetate. The Extracellular segment spans residues 60 to 70; the sequence is SQNNPYKMDTM. A helical membrane pass occupies residues 71–91; sequence FILADTLSKIFVFVLLSLWAV. At 92–100 the chain is on the cytoplasmic side; the sequence is FFKAGGLDW. Residues 101 to 121 form a helical membrane-spanning segment; the sequence is LITLFSIATLPNTLVMGIPLL. Residues asparagine 112 and leucine 114 each contribute to the (indol-3-yl)acetate site. Topologically, residues 122-131 are extracellular; the sequence is QAMYGDYTQT. A helical membrane pass occupies residues 132–152; that stretch reads LMVQLVVLQCIIWYTLLLFLF. (indol-3-yl)acetate is bound at residue tyrosine 145. The Cytoplasmic portion of the chain corresponds to 153–430; sequence ELRAARLLIR…LSRNPNTYSS (278 aa). Phosphoserine is present on residues serine 230 and serine 308. Residues 431 to 451 form a helical membrane-spanning segment; that stretch reads LLGLVWSLISFKWNIPMPNIV. Residues 452-454 are Extracellular-facing; sequence DFS. A helical membrane pass occupies residues 455-475; sequence IKIISDAGLGMAMFSLGLFMA. Over 476 to 491 the chain is Cytoplasmic; that stretch reads LQPKMIPCGAKKATMG. The chain crosses the membrane as a helical span at residues 492 to 512; sequence MLIRFISGPLFMAGASLLVGL. Over 513–515 the chain is Extracellular; the sequence is RGS. Residues 516–536 traverse the membrane as a helical segment; that stretch reads RLHAAIVQAALPQGIVPFVFA. Positions 530 and 531 each coordinate (indol-3-yl)acetate. At 537-549 the chain is on the cytoplasmic side; the sequence is REYNLHPDLLSTL. A helical transmembrane segment spans residues 550–570; the sequence is VIFGMIVSLPVTILYYVLLGL.

The protein belongs to the auxin efflux carrier (TC 2.A.69.1) family. Homodimer. As to expression, expressed in the vasculature of the primary root, cotyledons, floral stem, sepals and the main transmitting tract of the reproductive silique. Expressed in embryos, shoot meristem, root tip and lateral root meristems. Expressed in the nectaries and the floral organ boundaries of the anthers. Detected in pollen. Expressed in broad subepidermal domains that narrowed to sites of vein formation. Expressed in veins of mature leaves.

Its subcellular location is the endoplasmic reticulum membrane. In terms of biological role, component of the intracellular auxin-transport pathway. Regulates auxin transport and auxin homeostasis. Directly involved in the regulation of nectar production. Involved in unfolded protein response (UPR) activation. Involved in the control of vein patterning. Redundantly with PIN8, inhibits the vein-formation-promoting functions of PIN5. PIN5, PIN6, and PIN8 control vein network geometry, but they are expressed in mutually exclusive domains of leaf vascular cells. The protein is Auxin efflux carrier component 6 of Arabidopsis thaliana (Mouse-ear cress).